A 143-amino-acid polypeptide reads, in one-letter code: MAKKIVGFIKLQIPAGKANPSPPVGPALGQRGLNIMEFCKAFNAQTQGMEPGLPVPVVITAYADKSFTFVMKTPPATVLIKKAAKVDKGSSKPHTDKVGSITRAQAEEIAKTKMPDLTAADLDAAVRTIAGSARSMGITVEGV.

This sequence belongs to the universal ribosomal protein uL11 family. Part of the ribosomal stalk of the 50S ribosomal subunit. Interacts with L10 and the large rRNA to form the base of the stalk. L10 forms an elongated spine to which L12 dimers bind in a sequential fashion forming a multimeric L10(L12)X complex. In terms of processing, one or more lysine residues are methylated.

In terms of biological role, forms part of the ribosomal stalk which helps the ribosome interact with GTP-bound translation factors. This is Large ribosomal subunit protein uL11 from Burkholderia multivorans (strain ATCC 17616 / 249).